The sequence spans 163 residues: Lipoprotein signal peptidase (163 aa).

Transmembrane regions (helical) follow at residues 9 to 29 (AWPWLWLSVLVILLDQLSKYL), 42 to 62 (ILPFLNFTLNYNTGAAFSFLG), 67 to 87 (WQIIFFAAISFVVSIFLILWL), and 93 to 113 (SEIMMSLGLSLIIGGALGNFI). Residues aspartate 123 and aspartate 141 contribute to the active site. A helical membrane pass occupies residues 137-157 (FNVADSAICVGVFLLIVYMLL).

Belongs to the peptidase A8 family.

The protein resides in the cell inner membrane. The enzyme catalyses Release of signal peptides from bacterial membrane prolipoproteins. Hydrolyzes -Xaa-Yaa-Zaa-|-(S,diacylglyceryl)Cys-, in which Xaa is hydrophobic (preferably Leu), and Yaa (Ala or Ser) and Zaa (Gly or Ala) have small, neutral side chains.. It participates in protein modification; lipoprotein biosynthesis (signal peptide cleavage). Its function is as follows. This protein specifically catalyzes the removal of signal peptides from prolipoproteins. The chain is Lipoprotein signal peptidase from Coxiella burnetii (strain Dugway 5J108-111).